The following is a 207-amino-acid chain: Large ribosomal subunit protein bL25 (207 aa).

It belongs to the bacterial ribosomal protein bL25 family. CTC subfamily. Part of the 50S ribosomal subunit; part of the 5S rRNA/L5/L18/L25 subcomplex. Contacts the 5S rRNA. Binds to the 5S rRNA independently of L5 and L18.

This is one of the proteins that binds to the 5S RNA in the ribosome where it forms part of the central protuberance. This Paraburkholderia xenovorans (strain LB400) protein is Large ribosomal subunit protein bL25.